Reading from the N-terminus, the 437-residue chain is UDP-N-acetylmuramoylalanine--D-glutamate ligase (437 aa).

115-121 serves as a coordination point for ATP; sequence GSNGKST.

Belongs to the MurCDEF family.

Its subcellular location is the cytoplasm. The enzyme catalyses UDP-N-acetyl-alpha-D-muramoyl-L-alanine + D-glutamate + ATP = UDP-N-acetyl-alpha-D-muramoyl-L-alanyl-D-glutamate + ADP + phosphate + H(+). The protein operates within cell wall biogenesis; peptidoglycan biosynthesis. Cell wall formation. Catalyzes the addition of glutamate to the nucleotide precursor UDP-N-acetylmuramoyl-L-alanine (UMA). This Vibrio campbellii (strain ATCC BAA-1116) protein is UDP-N-acetylmuramoylalanine--D-glutamate ligase.